The primary structure comprises 119 residues: Protein YdaY (119 aa).

The polypeptide is Protein YdaY (ydaY) (Escherichia coli (strain K12)).